The following is a 406-amino-acid chain: Renin (406 aa).

Positions 1–23 (MDGWRRMPRWGLLLLLWGSCTFG) are cleaved as a signal peptide. A propeptide spans 24-66 (LPTDTTTFKRIFLKRMPSIRESLKERGVDMARLGPEWSQPMKR) (activation peptide). Asn71 carries an N-linked (GlcNAc...) asparagine glycan. Residues 86–403 (YYGEIGIGTP…DRRNNRIGFA (318 aa)) form the Peptidase A1 domain. The active site involves Asp104. Cys117 and Cys124 form a disulfide bridge. N-linked (GlcNAc...) asparagine glycosylation occurs at Asn141. An intrachain disulfide couples Cys283 to Cys287. Asp292 is an active-site residue. A disulfide bridge links Cys325 with Cys362.

The protein belongs to the peptidase A1 family. In terms of assembly, interacts with ATP6AP2.

Its subcellular location is the secreted. The protein localises to the membrane. The catalysed reaction is Cleavage of Leu-|-Xaa bond in angiotensinogen to generate angiotensin I.. Interaction with ATP6AP2 results in a 5-fold increased efficiency in angiotensinogen processing. Functionally, renin is a highly specific endopeptidase, whose only known function is to generate angiotensin I from angiotensinogen in the plasma, initiating a cascade of reactions that produce an elevation of blood pressure and increased sodium retention by the kidney. The polypeptide is Renin (REN) (Homo sapiens (Human)).